Consider the following 324-residue polypeptide: Large ribosomal subunit protein uL3m (324 aa).

A mitochondrion-targeting transit peptide spans 1–41 (MAAVPRGLLSRINQFLSIRSITPSSSESLPHCSSFFLIRRF). The tract at residues 206-229 (PASHGASLSHRSGGSTGQRDAPGK) is disordered.

It belongs to the universal ribosomal protein uL3 family. In terms of assembly, part of the 50S ribosomal subunit.

It localises to the mitochondrion. Its function is as follows. One of the primary rRNA binding proteins, it binds directly near the 3'-end of the 23S rRNA, where it nucleates assembly of the 50S subunit. This chain is Large ribosomal subunit protein uL3m, found in Arabidopsis thaliana (Mouse-ear cress).